The following is a 265-amino-acid chain: Probable protein VP2 (265 aa).

Disordered stretches follow at residues 44-110, 152-171, and 194-265; these read RLGR…DDLS, STRSTSTRASRSTDGTSDVA, and VQNA…CSSN. Over residues 48 to 60 the composition is skewed to pro residues; it reads PQPPRPPGGPPGP. Low complexity predominate over residues 152–168; it reads STRSTSTRASRSTDGTS. The segment covering 221–242 has biased composition (basic residues); the sequence is GKTRPRKKPRAKQKPKKRRRYR. The segment covering 243-265 has biased composition (low complexity); the sequence is SSSNSSSKSNDSSDAESSTCSSN.

Phosphorylated at C-terminal serines.

The chain is Probable protein VP2 from Torque teno virus (isolate Human/Germany/KAV/2001) (TTV).